Here is a 492-residue protein sequence, read N- to C-terminus: MSLLKMEYNLYAELKKMTCGQTISLFNEDGDFVEVEPGSSFKFLIPKGFYSSPCVKTSLVFETLTTTDNKITSINPTNAPKLYPLQRKVVSEVVSNMRKMIELKRPLYITLHLACGFGKTITTCYLMTTHGRKTIICVPNKMLIHQWKTQVEAVGLEHKISIDGVSSLLKELKTQSPDVLIVVSRHLTNDAFCKYINKHYDLFILDESHTYNLMNNTAVTRFLAYYPPMMCYFLTATPRPANRIYCNSIINIAKLSDLKKTIYIVDSFFEPYSTDNIRNMVKRLDGPSNKYHIYTEKLLSVDEPRNQLILDTLVEEFKSGTINRILVITKLREHMVFFYKRLLDLFGAEVVFIGDAQNRRTPDMVKSIKELNRFIFVSTLFYSGTGLDIPSLDSLFICSAVINNMQIEQLLGRVCRETELLDRTVYVFPNTSIKEIKYMIGNFVQRIISLSVDKLGFKQESYQKHQESEPASVPTSSREERVLNRIFNSQNR.

Residues 100-256 (MIELKRPLYI…NSIINIAKLS (157 aa)) enclose the Helicase ATP-binding domain. 113 to 120 (LACGFGKT) contacts ATP. The DEAH box signature appears at 206–209 (DESH).

It belongs to the helicase family. Poxviruses subfamily. Interacts with OPG087. Might be part of a transcription complex composed at least of OPG087, OPG110, and OPG145.

Its subcellular location is the virion. In terms of biological role, DNA helicase which seems to act as a postreplicative transcription termination factor. Involved in ATP-dependent release of nascent RNA. Forms a stable complex with single-stranded DNA, and to a lesser extent RNA. The sequence is that of Transcript termination protein OPG145 (OPG145) from Cynomys gunnisoni (Gunnison's prairie dog).